Consider the following 249-residue polypeptide: ATP synthase subunit a, chloroplastic (249 aa).

The next 5 membrane-spanning stretches (helical) occupy residues 40 to 60 (QVLI…VLAV), 97 to 117 (VPFI…GALL), 136 to 156 (INTT…AGLS), 201 to 221 (LVVV…VMFL), and 222 to 242 (GLFT…AYIG).

It belongs to the ATPase A chain family. F-type ATPases have 2 components, CF(1) - the catalytic core - and CF(0) - the membrane proton channel. CF(1) has five subunits: alpha(3), beta(3), gamma(1), delta(1), epsilon(1). CF(0) has four main subunits: a, b, b' and c.

It localises to the plastid. Its subcellular location is the chloroplast thylakoid membrane. Functionally, key component of the proton channel; it plays a direct role in the translocation of protons across the membrane. The chain is ATP synthase subunit a, chloroplastic from Draba nemorosa (Woodland whitlowgrass).